The primary structure comprises 812 residues: Glycerol-3-phosphate acyltransferase (812 aa).

Residues 308 to 313 (CHRSHM) carry the HXXXXD motif motif.

Belongs to the GPAT/DAPAT family.

It localises to the cell inner membrane. It catalyses the reaction sn-glycerol 3-phosphate + an acyl-CoA = a 1-acyl-sn-glycero-3-phosphate + CoA. It participates in phospholipid metabolism; CDP-diacylglycerol biosynthesis; CDP-diacylglycerol from sn-glycerol 3-phosphate: step 1/3. The sequence is that of Glycerol-3-phosphate acyltransferase from Pseudoalteromonas translucida (strain TAC 125).